The following is a 327-amino-acid chain: Mitochondrial carnitine carrier (327 aa).

Residues 1-11 (MSSDTSLSESS) show a composition bias toward low complexity. The disordered stretch occupies residues 1 to 29 (MSSDTSLSESSLLKEESGSLTKSRPPIKS). Transmembrane regions (helical) follow at residues 33–49 (RENIKSFVAGGVGGVCA), 107–123 (LGVTPIFAVSFWGYDVG), 141–162 (MGQMAAAGFISAIPTTLVTAPT), 196–212 (GSLATLARDGPGSALYF), 244–260 (LAGGIAGMSMWLAVFPI), and 293–313 (FFPGLGPALLRSFPANAATFL). 3 Solcar repeats span residues 33–126 (RENI…GKKL), 139–221 (LTMG…SKNY), and 237–321 (VNIL…THSL).

It belongs to the mitochondrial carrier (TC 2.A.29) family.

Its subcellular location is the mitochondrion inner membrane. In terms of biological role, transports carnitine, acetylcarnitine, propionylcarnitine and to a much lower extent medium- and long-chain acylcarnitines. The protein is Mitochondrial carnitine carrier (CRC1) of Saccharomyces cerevisiae (strain ATCC 204508 / S288c) (Baker's yeast).